Reading from the N-terminus, the 64-residue chain is Large ribosomal subunit protein uL29 (64 aa).

The protein belongs to the universal ribosomal protein uL29 family.

The protein is Large ribosomal subunit protein uL29 of Nitratiruptor sp. (strain SB155-2).